A 348-amino-acid polypeptide reads, in one-letter code: MDPNGEHSPLGFLPCYKPPGATSRDLVNRAQRRLRGEFGLRKLKVGHTGTLDPLAEGLVLLAIGSAARLTPWVLQHGKRYLADFRLGVSSESGDLESELVTQTDVKLPTAAEIEQVLKDFHGVVEQTPPAHSAIKVDGERAHKRARRGEDFEMPKRRILIDSVKLISYEPPMMRLDVRCGSGTYLRTLGMDVAAACGCAAVMTKLIRNEVGRFTLDDTLDCAFMFDDDDREKMSSEPMVKYLRPAIEGLTHMPAMNLDRQQIGMLQAGIRISGTPEAPSEPLPEAWIGCIDQVDTFDRNTDVLDCIGVDRSDGSSGPWGELVAILRPHGKLWHPLRVFPTTESITLRG.

Residue Asp-52 is the Nucleophile of the active site.

The protein belongs to the pseudouridine synthase TruB family. Type 1 subfamily.

It carries out the reaction uridine(55) in tRNA = pseudouridine(55) in tRNA. Its function is as follows. Responsible for synthesis of pseudouridine from uracil-55 in the psi GC loop of transfer RNAs. The sequence is that of tRNA pseudouridine synthase B from Rhodopirellula baltica (strain DSM 10527 / NCIMB 13988 / SH1).